We begin with the raw amino-acid sequence, 231 residues long: uncharacterized protein (231 aa).

The signal sequence occupies residues 1–25; that stretch reads MAKWVPALLLRRVPLFSLRFRPASS. The Extracellular segment spans residues 26–200; it reads TFLPVLAATE…SRPSPSATLT (175 aa). Positions 39-64 are disordered; the sequence is SVPSGDLSMPVKTRAEGEDDGFGEAG. A helical membrane pass occupies residues 201-225; that stretch reads LLLASSCLLAPAPPSFILLLFTLIA. The Cytoplasmic portion of the chain corresponds to 226–231; the sequence is PDLPHS.

The protein resides in the membrane. This is an uncharacterized protein from Homo sapiens (Human).